The sequence spans 360 residues: UDP-arabinopyranose mutase 2 (360 aa).

Val-2 carries the N-acetylvaline modification. A DXD motif motif is present at residues 110-112 (DDD). A glycan (N-linked (Glc...) arginine) is linked at Arg-158.

This sequence belongs to the RGP family. In terms of assembly, heteromers with RGP1, RGP4 and RGP5. The cofactor is Mn(2+). Requires Mg(2+) as cofactor. Reversibly glycosylated in vitro by UDP-glucose, UDP-xylose and UDP-galactose, but not UDP-mannose. Predominantly expressed in shoot and root apical meristems. Expressed in epidermal cells of leaves, inflorescence stems and seed coat. Expressed in pollen.

The protein resides in the cytoplasm. It localises to the cytosol. The protein localises to the golgi apparatus. The catalysed reaction is UDP-beta-L-arabinofuranose = UDP-beta-L-arabinopyranose. UDP-L-arabinose mutase involved in the biosynthesis of cell wall non-cellulosic polysaccharides. Catalyzes the interconvertion of UDP-L-arabinopyranose (UDP-Arap) and UDP-L-arabinofuranose (UDP-Araf) in vitro. Preferentially catalyzes the formation of UDP-Arap from UDP-Araf. At thermodynamic equilibrium in vitro the ratio of the pyranose form over the furanose form is 95:5. Is not active on other UDP-sugars (UDP-Gal, UDP-Xyl, UDP-Glc, GDP-Man and GDP-Fuc). Functions redundantly with RGP2 and is essential for proper cell walls and pollen development. Probably involved in the formation of the pectocellulosic cell wall layer intine. Is probably active as heteromer in vivo. In Arabidopsis thaliana (Mouse-ear cress), this protein is UDP-arabinopyranose mutase 2.